The chain runs to 315 residues: MGKEPGSTKFQTDFRRHLREQNISGNLVHLLCEIAEASKYVINAVRTGDLGVAGTSNLYGEEQLALDVLSDRILRKRLMYSGVVCNIASEEMDEIFQVTSNPLGMFSVAYDPLDGSSLVDVNLAVGTIVGIYQGDNLLQPGRNMVGAMYILYGPRVSMVYSVGKGVYEFTMNHLMEFTLTREKVQMNPSGDIYSPGGLRKKYTPENEAYIRYLEDKGSKLRYSGGFVPDINQILMKGKGIFMYPALTDSPNGKLRLLFELNPMAYLIEQAGGAATNGCMPILDMQPEGLDQRAPIYIGCKEDVAKATEFLNGACA.

Mg(2+) contacts are provided by glutamate 90, aspartate 111, leucine 113, and aspartate 114. Substrate contacts are provided by residues 114 to 117 (DGSS), tyrosine 222, and lysine 253. Glutamate 259 provides a ligand contact to Mg(2+).

Belongs to the FBPase class 1 family. In terms of assembly, homotetramer. Mg(2+) is required as a cofactor.

The protein localises to the cytoplasm. The enzyme catalyses beta-D-fructose 1,6-bisphosphate + H2O = beta-D-fructose 6-phosphate + phosphate. The protein operates within carbohydrate biosynthesis; gluconeogenesis. The protein is Fructose-1,6-bisphosphatase class 1 of Trichlorobacter lovleyi (strain ATCC BAA-1151 / DSM 17278 / SZ) (Geobacter lovleyi).